The sequence spans 100 residues: Large ribosomal subunit protein bL28 (100 aa).

The protein belongs to the bacterial ribosomal protein bL28 family.

The protein is Large ribosomal subunit protein bL28 of Methylobacterium radiotolerans (strain ATCC 27329 / DSM 1819 / JCM 2831 / NBRC 15690 / NCIMB 10815 / 0-1).